We begin with the raw amino-acid sequence, 100 residues long: Large ribosomal subunit protein eL14 (100 aa).

This sequence belongs to the eukaryotic ribosomal protein eL14 family.

The protein is Large ribosomal subunit protein eL14 of Aeropyrum pernix (strain ATCC 700893 / DSM 11879 / JCM 9820 / NBRC 100138 / K1).